Here is a 635-residue protein sequence, read N- to C-terminus: DNA mismatch repair protein MutL (635 aa).

The protein belongs to the DNA mismatch repair MutL/HexB family.

Functionally, this protein is involved in the repair of mismatches in DNA. It is required for dam-dependent methyl-directed DNA mismatch repair. May act as a 'molecular matchmaker', a protein that promotes the formation of a stable complex between two or more DNA-binding proteins in an ATP-dependent manner without itself being part of a final effector complex. The sequence is that of DNA mismatch repair protein MutL from Yersinia pestis bv. Antiqua (strain Angola).